A 134-amino-acid chain; its full sequence is Profilin-3 (134 aa).

Residues C13 and C118 are joined by a disulfide bond. The Involved in PIP2 interaction signature appears at 84-100; the sequence is AVIRGKKGSGGITIKKT. T114 carries the phosphothreonine modification.

Belongs to the profilin family. Occurs in many kinds of cells as a complex with monomeric actin in a 1:1 ratio. Post-translationally, phosphorylated by MAP kinases.

It is found in the cytoplasm. Its subcellular location is the cytoskeleton. Its function is as follows. Binds to actin and affects the structure of the cytoskeleton. At high concentrations, profilin prevents the polymerization of actin, whereas it enhances it at low concentrations. By binding to PIP2, it inhibits the formation of IP3 and DG. In Olea europaea (Common olive), this protein is Profilin-3 (PRO3).